Reading from the N-terminus, the 1455-residue chain is MATQAVPATAKKRIRKVFGNIHEVVQMPNLIEVQRESYEQFLRSRPADGYVSGLEKTLRSVFPIRDFAGTAELDFVQYELEDPKYDTDECRQRGMTYAAPMRVTLRLIVFEVDPDTETRSVLDIKEQDVYMGDMPLMTENGTFLINGTERVIVSQMHRSPGVLFDHDRGKTHASGKYLFAARVIPYRGSWLDFEFDAKDIVNVRIDRKRKLPVTSLLRALGDAVIEVNPDKGKFEAGDIVAISGVNRACRVKAVAGRLVTVEDPTGAIIPGGLIQTAEGEKIGHVARIRLQGMSGEDILNYFYRTQRFVRGENGWKVPFVAENWRGQKPAFDVVNADTGEVVFPAGTKISPRAANKAGKDGLETLLIPTDQIFGRYSAYDLIDESTGRIYIEAGDEVTPENLEALDKAGFDHVDLLDIDHVSTGPWIRNTLKADKVEDRDHALSEIYRVMRPGEPPTKETAEALFAGLFFDSERYDLSAVGRVKLNMRLELDAEDTVTTLRSEDILAVVKTLVDLKDGKGEIDDIDNLGNRRVRSVGELLENQYRVGLLRMERAVKERMSSVDVSTAMPNDLINAKPAVAAVREFFGSSQLSQFMDQTNPLSEVTHKRRVSALGPGGLTRERAGFEVRDVHPTHYGRICPIETPEGPNIGLINSLASFSRVNKYGFIETPYRKIVDGKVTNEVVYLSAMEEAKHTIAQANAELDSEGRFVEDLISAREAGEFLMAPRDHVTLMDVSPKQLVSVAASLIPFLENDDANRALMGSNMQRQAVPLVRAEAPFVGTGMEETVARDSGAAIAAKRSGIVDQVDATRIVVRATGAVDAGKSGVDIYTLMKFQRSNQSTCINQRPLVKVGDVVNAGDIIADGPSTEFGELALGRNVLVAFMPWNGYNYEDSILISERIVKDDVFTSIHIDEFEVMARDTKLGPEDITRDIPNVGEEALRNLDEAGIVYIGAEVEPGDILCGKITPKGESPMTPEEKLLRAIFGEKASDVRDTSLRLPPGVSGTVVDVRVFNRHGIDKDERAMAIEREEIDRLTKDREDERAILNRANYARLKEMLLGQIATAAPKGIKKGSEINEELLAEVEKREWWKFAVQDDARQADLEAVKAQYDDAVGLIVKKFEDRVEKLQRGDELPPGVLKMVKVFVAVKRKLQPGDKMAGRHGNKGVISRILPQEDMPFLEDGTPVDIVLNPLGVPSRMNVGQIFETHLGWAARGLGKQVTSALEAWREANPDAQAATPPAAVVDRLKEVYGKEYHADIEGRSTDQIVEMAGLLKNGVPMATPVFDGAREADVAEMLRRAGLDESGQVELFDGRTGDQFDRKVTVGYIYMLKLHHLVDDKIHARSIGPYSLVTQQPLGGKAQFGGQRFGEMEVWALQAYGAAYTLQEMLTVKSDDVVGRTKVYEAIVKGDDTFEAGIPESFNVLVKEMRSLGLNVELSSIEDQSDDDDGLAEAAE.

Belongs to the RNA polymerase beta chain family. As to quaternary structure, the RNAP catalytic core consists of 2 alpha, 1 beta, 1 beta' and 1 omega subunit. When a sigma factor is associated with the core the holoenzyme is formed, which can initiate transcription.

The catalysed reaction is RNA(n) + a ribonucleoside 5'-triphosphate = RNA(n+1) + diphosphate. Functionally, DNA-dependent RNA polymerase catalyzes the transcription of DNA into RNA using the four ribonucleoside triphosphates as substrates. This chain is DNA-directed RNA polymerase subunit beta, found in Rhizorhabdus wittichii (strain DSM 6014 / CCUG 31198 / JCM 15750 / NBRC 105917 / EY 4224 / RW1) (Sphingomonas wittichii).